Reading from the N-terminus, the 768-residue chain is Disabled homolog 2 (768 aa).

The segment covering 1–16 (MSNEVETSTTNGQPDQ) has biased composition (polar residues). The segment at 1-36 (MSNEVETSTTNGQPDQQAAPKAPSKKEKKKGSEKTD) is disordered. Serine 2 carries the N-acetylserine modification. At serine 2 the chain carries Phosphoserine. Residues 45–196 (GDGVKYKAKL…KAEENGSEAL (152 aa)) enclose the PID domain. Phosphotyrosine is present on tyrosine 170. Serine 193 bears the Phosphoserine mark. Positions 230-447 (ESRDILLVDL…KPGRGRRTAK (218 aa)) are required for localization to clathrin-coated pits. Positions 285-449 (NFFPTPNPDP…GRGRRTAKSS (165 aa)) are disordered. 2 consecutive short sequence motifs (DPF) follow at residues 293–295 (DPF) and 298–300 (DPF). Composition is skewed to polar residues over residues 303–317 (PDQS…LTSA), 325–334 (GSLSTPQSKG), and 367–381 (PSSQ…QNGV). Phosphoserine; in mitosis occurs at positions 326 and 328. Phosphoserine is present on serine 401. Positions 601-731 (TISTQSFPQP…GVLSGTKSAD (131 aa)) are sufficient for interaction with GRB2. The segment at 619–627 (PPQPPPRNG) is required for interaction with CSK. A required for interaction with MYO6 region spans residues 649-768 (KEVKEMFKDF…HRSPFGNPFA (120 aa)). 2 disordered regions span residues 660 to 682 (LRQP…SSAF) and 709 to 768 (NKIN…NPFA). Residues 663–671 (PPLVPSRKG) form a required for interaction with GRB2 and CSK region. Threonine 673 carries the phosphothreonine modification. Phosphoserine is present on serine 675. Residues 708–724 (LNKINEPPKPAPRQGVL) form a sufficient for interaction with SH3KBP1 SH3 domain region. Positions 724-755 (LSGTKSADNSLENPFSKGFSSTNPSVVSQPAS) are enriched in polar residues. Phosphoserine occurs at positions 729 and 761.

Can interact (via PID domain) with LDLR, APP, APLP1 and APLP2, and weakly with INPP5D (via NPXY motifs); the interaction is impaired by tyrosine phosphorylation of the respective NPXY motifs. Can weakly interact (via PID domain) with LRP1 (via NPXY motif); the interaction is enhanced by tyrosine phosphorylation of the NPXY motif. Interacts with LRP2 (via NPXY motif); the interaction is not affected by tyrosine phosphorylation of the NPXY motif. Interacts with clathrin; in vitro can assemble clathrin triskelia into polyhedral coats. Interacts with AP2A2, ITGB1, ITGB3, ITGB5, PIAS2, DAB2IP, NOSTRIN, FCHO1, DVL3, EPS15, ITSN1 and EPS15L1. Interacts with SH3KBP1 (via SH3 domains). Interacts with GRB2; competes with SOS1 for binding to GRB2 and the interaction is enhanced by EGF and NT-3 stimulation. Interacts with MAP3K7; the interaction is induced by TGF-beta stimulation and may mediate TGF-beta stimulated JNK activation. Interacts with AXIN1 and PPP1CA; the interactions are mutually exclusive. Interacts with the globular tail of MYO6. Interacts (via DPF motifs) with FCHO2; the interaction is direct and required for DAB2-mediated LDLR endocytosis. Interacts with LRP6; the interaction involves LRP6 phosphorylation by CK2 and sequesters LRP6 towards clathrin-mediated endocytosis. Associates with the TGF-beta receptor complex. Interacts with SMAD2 and SMAD3; the interactions are enhanced upon TGF-beta stimulation. Interacts with GRB2; the interaction is enhanced by EGF and NT-3 stimulation. Interacts with SRC; the interaction is enhanced by EGF stimulation. Interacts with GRB2; the interaction is enhanced by EGF and NT-3 stimulation. Interacts (via NPXY motif) with DAB2 (via PID domain). Phosphorylated. Phosphorylation during mitosis is leading to membrane displacement. There is some ambiguity for the mitotic phosphosite Ser-326/328. As to expression, prostate.

It localises to the cytoplasm. The protein localises to the cytoplasmic vesicle. The protein resides in the clathrin-coated vesicle membrane. It is found in the membrane. Its subcellular location is the clathrin-coated pit. Its function is as follows. Adapter protein that functions as a clathrin-associated sorting protein (CLASP) required for clathrin-mediated endocytosis of selected cargo proteins. Can bind and assemble clathrin, and binds simultaneously to phosphatidylinositol 4,5-bisphosphate (PtdIns(4,5)P2) and cargos containing non-phosphorylated NPXY internalization motifs, such as the LDL receptor, to recruit them to clathrin-coated pits. Can function in clathrin-mediated endocytosis independently of the AP-2 complex. Involved in endocytosis of integrin beta-1; this function seems to redundant with the AP-2 complex and seems to require DAB2 binding to endocytosis accessory EH domain-containing proteins such as EPS15, EPS15L1 and ITSN1. Involved in endocytosis of cystic fibrosis transmembrane conductance regulator/CFTR. Involved in endocytosis of megalin/LRP2 lipoprotein receptor during embryonal development. Required for recycling of the TGF-beta receptor. Involved in CFTR trafficking to the late endosome. Involved in several receptor-mediated signaling pathways. Involved in TGF-beta receptor signaling and facilitates phosphorylation of the signal transducer SMAD2. Mediates TFG-beta-stimulated JNK activation. May inhibit the canoniocal Wnt/beta-catenin signaling pathway by stabilizing the beta-catenin destruction complex through a competing association with axin preventing its dephosphorylation through protein phosphatase 1 (PP1). Sequesters LRP6 towards clathrin-mediated endocytosis, leading to inhibition of Wnt/beta-catenin signaling. May activate non-canonical Wnt signaling. In cell surface growth factor/Ras signaling pathways proposed to inhibit ERK activation by interrupting the binding of GRB2 to SOS1 and to inhibit SRC by preventing its activating phosphorylation at 'Tyr-419'. Proposed to be involved in modulation of androgen receptor (AR) signaling mediated by SRC activation; seems to compete with AR for interaction with SRC. Plays a role in the CSF-1 signal transduction pathway. Plays a role in cellular differentiation. Involved in cell positioning and formation of visceral endoderm (VE) during embryogenesis and proposed to be required in the VE to respond to Nodal signaling coming from the epiblast. Required for the epithelial to mesenchymal transition, a process necessary for proper embryonic development. May be involved in myeloid cell differentiation and can induce macrophage adhesion and spreading. May act as a tumor suppressor. This is Disabled homolog 2 (Dab2) from Rattus norvegicus (Rat).